The following is a 350-amino-acid chain: Probable lactoylglutathione lyase, chloroplastic (350 aa).

The N-terminal 61 residues, Met1–Leu61, are a transit peptide targeting the chloroplast. 2 consecutive VOC domains span residues Arg88–Arg212 and Pro218–Asn342. His91 contacts Zn(2+). Residue Arg95 coordinates substrate. Glu142 lines the Zn(2+) pocket. The substrate site is built by Asn146 and His160. His160 and Glu208 together coordinate Zn(2+). Residue Glu208 is the Proton donor/acceptor of the active site.

It belongs to the glyoxalase I family. Requires Zn(2+) as cofactor.

It localises to the plastid. Its subcellular location is the chloroplast stroma. The catalysed reaction is (R)-S-lactoylglutathione = methylglyoxal + glutathione. It participates in secondary metabolite metabolism; methylglyoxal degradation; (R)-lactate from methylglyoxal: step 1/2. Catalyzes the conversion of hemimercaptal, formed from methylglyoxal and glutathione, to S-lactoylglutathione. This is Probable lactoylglutathione lyase, chloroplastic from Arabidopsis thaliana (Mouse-ear cress).